The primary structure comprises 317 residues: Transcription factor EC (317 aa).

The interval 1–90 (MTFDCRVCDQ…GLTDAPCPSI (90 aa)) is necessary for transcriptional transactivation. A bHLH domain is found at 110 to 163 (QKKDNHNLIERRRRYNINYRIKELGTLIPKSNDPDMRWNKGTILKASVDYIKWL). The tract at residues 242–317 (TSPEFYEQAV…SLSSEDGDEL (76 aa)) is necessary for transcriptional transactivation.

Belongs to the MiT/TFE family. In terms of assembly, homodimer. Forms heterodimers with MITF. Interacts with MITF. Forms heterodimers with TFE3. In terms of tissue distribution, expressed in osteoclast-like cells (at protein level). Expressed in cells of the mononuclear phagocyte lineage. Expressed in macrophages and in osteoclast-like cells.

Its subcellular location is the nucleus. In terms of biological role, transcriptional regulator that acts as a repressor or an activator. Acts as a transcriptional transactivator on the proximal promoter region of the tartrate-resistant acid phosphatase (TRAP) E-box containing promoter. Collaborates with MITF in target gene activation. Acts as a transcriptional repressor on minimal promoter containing element F (that includes an E-box sequence). Binds to element F in an E-box sequence-specific manner. Acts as a transcriptional repressor on minimal promoter containing mu E3 enhancer sequence. Binds to mu E3 DNA sequence of the immunoglobulin heavy-chain gene enhancer. Binds DNA in a homo- or heterodimeric form. The protein is Transcription factor EC (Tfec) of Mus musculus (Mouse).